Consider the following 395-residue polypeptide: Transcriptional coactivator yorkie (395 aa).

A disordered region spans residues 73-100; the sequence is NSFFTPPAPSHSRANSADSTYDAGSQSS. Serine 82, serine 88, serine 100, serine 117, and serine 145 each carry phosphoserine. The span at 84–100 shows a compositional bias: polar residues; sequence SRANSADSTYDAGSQSS. 2 disordered regions span residues 129–150 and 162–199; these read PSPQHSRLAIHHSRARSSPASL and AAAANNPNANPSSQQQPAGPTFPENSAQEFPSGAPASS. Serine 146 carries the post-translational modification Phosphoserine; by CDK7. Serine 149 bears the Phosphoserine mark. Residues 162 to 179 show a composition bias toward low complexity; sequence AAAANNPNANPSSQQQPA. Serine 227 is subject to Phosphoserine. Tyrosine 228 is subject to Phosphotyrosine. The residue at position 232 (serine 232) is a Phosphoserine. WW domains follow at residues 241-274 and 310-343; these read GALPPGWEQAKTNDGQIYYLNHTTKSTQWEDPRI and GPLPDGWEQAVTESGDLYFINHIDRTTSWNDPRM.

It belongs to the YAP1 family. As to quaternary structure, interacts (via WW domains) with wts. Interacts (via N-terminus) with sd (via C-terminus) and this interaction enhances the transcriptional activity of sd. The phosphorylated form interacts with 14-3-3epsilon and 14-3-3zeta. Interacts with Ack and ex. In terms of processing, its activity is regulated by multiple phosphorylation events. Phosphorylation at Ser-88, Ser-145 and Ser-227 negatively regulate its activity and restrict its nuclear localization. Wts-mediated phosphorylation at Ser-145 promotes interaction with 14-3-3epsilon and 14-3-3zeta. Phosphorylation at Ser-88 and Ser-227 regulate nuclear localization and activity independent of 14-3-3 association. Phosphorylation at Ser-146 by Cdk7 promotes its stability by preventing ubiquitination by the DCX(DCAF12) complex. Post-translationally, ubiquitinated by the DCX(DCAF12) complex, leading to its degradation. Phosphorylation at Ser-146 by Cdk7 prevents ubiquitination by the DCX(DCAF12) complex.

Its subcellular location is the cytoplasm. It is found in the nucleus. Its function is as follows. Transcriptional coactivator which is the critical downstream regulatory target in the Hippo/SWH (Sav/Wts/Hpo) signaling pathway that plays a pivotal role in organ size control and tumor suppression by restricting proliferation and promoting apoptosis. The core of this pathway is composed of a kinase cascade wherein Hippo (Hpo), in complex with its regulatory protein Salvador (Sav), phosphorylates and activates Warts (Wts) in complex with its regulatory protein Mats, which in turn phosphorylates and inactivates the Yorkie (Yki) oncoprotein. The Hippo/SWH signaling pathway inhibits the activity of the transcriptional complex formed by Scalloped (sd) and Yki and the target genes of this pathway include cyclin-E (cycE), diap1 and bantam. Regulates the expression of G1/S-specific CycE and diap1, thereby promoting cell proliferation and inhibiting apoptosis. Required for transcriptional activity of sd in wing imaginal disks. Induces expression of expression of vestigial (vg) in wing and haltere disks and the expression of transcription factor E2f (E2f). In Drosophila melanogaster (Fruit fly), this protein is Transcriptional coactivator yorkie (yki).